A 469-amino-acid polypeptide reads, in one-letter code: Siroheme synthase (469 aa).

The precorrin-2 dehydrogenase /sirohydrochlorin ferrochelatase stretch occupies residues 1 to 203; the sequence is MDYLPIFTDL…GQEQDAKQEL (203 aa). NAD(+)-binding positions include 22-23 and 43-44; these read DV and PV. A Phosphoserine modification is found at S128. The tract at residues 214–469 is uroporphyrinogen-III C-methyltransferase; that stretch reads GQVALIGSGP…LQQSAVVKLA (256 aa). P223 contacts S-adenosyl-L-methionine. The active-site Proton acceptor is D246. Catalysis depends on K268, which acts as the Proton donor. S-adenosyl-L-methionine contacts are provided by residues 299-301, V304, 329-330, M381, and G410; these read GGD and TA.

This sequence in the N-terminal section; belongs to the precorrin-2 dehydrogenase / sirohydrochlorin ferrochelatase family. In the C-terminal section; belongs to the precorrin methyltransferase family.

The enzyme catalyses uroporphyrinogen III + 2 S-adenosyl-L-methionine = precorrin-2 + 2 S-adenosyl-L-homocysteine + H(+). The catalysed reaction is precorrin-2 + NAD(+) = sirohydrochlorin + NADH + 2 H(+). It carries out the reaction siroheme + 2 H(+) = sirohydrochlorin + Fe(2+). The protein operates within cofactor biosynthesis; adenosylcobalamin biosynthesis; precorrin-2 from uroporphyrinogen III: step 1/1. It participates in cofactor biosynthesis; adenosylcobalamin biosynthesis; sirohydrochlorin from precorrin-2: step 1/1. It functions in the pathway porphyrin-containing compound metabolism; siroheme biosynthesis; precorrin-2 from uroporphyrinogen III: step 1/1. Its pathway is porphyrin-containing compound metabolism; siroheme biosynthesis; siroheme from sirohydrochlorin: step 1/1. The protein operates within porphyrin-containing compound metabolism; siroheme biosynthesis; sirohydrochlorin from precorrin-2: step 1/1. Its function is as follows. Multifunctional enzyme that catalyzes the SAM-dependent methylations of uroporphyrinogen III at position C-2 and C-7 to form precorrin-2 via precorrin-1. Then it catalyzes the NAD-dependent ring dehydrogenation of precorrin-2 to yield sirohydrochlorin. Finally, it catalyzes the ferrochelation of sirohydrochlorin to yield siroheme. This chain is Siroheme synthase, found in Photobacterium profundum (strain SS9).